The chain runs to 361 residues: Molybdenum import ATP-binding protein ModC (361 aa).

In terms of domain architecture, ABC transporter spans 1 to 228 (MLNINIEKQF…EQMRPWVPLQ (228 aa)). 31–38 (GRSGAGKT) provides a ligand contact to ATP. The Mop domain occupies 289–356 (GSSIRNLLRG…IKGVTMTQMD (68 aa)).

It belongs to the ABC transporter superfamily. Molybdate importer (TC 3.A.1.8) family. As to quaternary structure, the complex is composed of two ATP-binding proteins (ModC), two transmembrane proteins (ModB) and a solute-binding protein (ModA).

It is found in the cell inner membrane. It carries out the reaction molybdate(out) + ATP + H2O = molybdate(in) + ADP + phosphate + H(+). Part of the ABC transporter complex ModABC involved in molybdenum import. Responsible for energy coupling to the transport system. This chain is Molybdenum import ATP-binding protein ModC, found in Shewanella sp. (strain MR-4).